Reading from the N-terminus, the 360-residue chain is Farnesyl pyrophosphate synthase (360 aa).

Residues Lys52, Arg55, and Gln90 each contribute to the isopentenyl diphosphate site. Residues Asp97 and Asp101 each contribute to the Mg(2+) site. A dimethylallyl diphosphate-binding site is contributed by Arg106. Arg107 contacts isopentenyl diphosphate. Dimethylallyl diphosphate contacts are provided by Lys194, Thr195, Gln237, Lys254, and Lys263.

Belongs to the FPP/GGPP synthase family. Mg(2+) is required as a cofactor.

It catalyses the reaction isopentenyl diphosphate + dimethylallyl diphosphate = (2E)-geranyl diphosphate + diphosphate. It carries out the reaction isopentenyl diphosphate + (2E)-geranyl diphosphate = (2E,6E)-farnesyl diphosphate + diphosphate. Its pathway is isoprenoid biosynthesis; farnesyl diphosphate biosynthesis; farnesyl diphosphate from geranyl diphosphate and isopentenyl diphosphate: step 1/1. It functions in the pathway isoprenoid biosynthesis; geranyl diphosphate biosynthesis; geranyl diphosphate from dimethylallyl diphosphate and isopentenyl diphosphate: step 1/1. Its function is as follows. Farnesyl pyrophosphate synthase; part of the second module of ergosterol biosynthesis pathway that includes the middle steps of the pathway. The second module involves the formation of farnesyl diphosphate, which is also an important intermediate in the biosynthesis of ubiquinone, dolichol, heme and prenylated proteins. This module also plays a key role in the biosynthesis of triterpenes such as ganoderic acids (GA), a group of highly oxygenated lanostane-type triterpenoids which are well recognized as a main group of unique bioactive compounds in the medicinal mushroom Ganoderma lucidum. Activity by the mevalonate kinase first converts mevalonate into 5-phosphomevalonate. 5-phosphomevalonate is then further converted to 5-diphosphomevalonate by the phosphomevalonate kinase. The diphosphomevalonate decarboxylase MVD then produces isopentenyl diphosphate. The isopentenyl-diphosphate delta-isomerase then catalyzes the 1,3-allylic rearrangement of the homoallylic substrate isopentenyl (IPP) to its highly electrophilic allylic isomer, dimethylallyl diphosphate (DMAPP). Finally the farnesyl diphosphate synthase FPS catalyzes the sequential condensation of isopentenyl pyrophosphate with dimethylallyl pyrophosphate, and then with the resultant geranylpyrophosphate to the ultimate product farnesyl pyrophosphate. This chain is Farnesyl pyrophosphate synthase, found in Ganoderma lucidum (Ling zhi medicinal fungus).